Here is a 337-residue protein sequence, read N- to C-terminus: Ornithine carbamoyltransferase (337 aa).

Carbamoyl phosphate contacts are provided by residues 56 to 59, glutamine 83, arginine 107, and 134 to 137; these read STRT and HPTQ. L-ornithine is bound by residues asparagine 168, aspartate 232, and 236–237; that span reads SM. Carbamoyl phosphate contacts are provided by residues 274–275 and arginine 320; that span reads CL.

Belongs to the aspartate/ornithine carbamoyltransferase superfamily. OTCase family.

It is found in the cytoplasm. It carries out the reaction carbamoyl phosphate + L-ornithine = L-citrulline + phosphate + H(+). Its pathway is amino-acid biosynthesis; L-arginine biosynthesis; L-arginine from L-ornithine and carbamoyl phosphate: step 1/3. Reversibly catalyzes the transfer of the carbamoyl group from carbamoyl phosphate (CP) to the N(epsilon) atom of ornithine (ORN) to produce L-citrulline. This chain is Ornithine carbamoyltransferase, found in Shigella flexneri serotype 5b (strain 8401).